Consider the following 193-residue polypeptide: Segregation and condensation protein B (193 aa).

It belongs to the ScpB family. In terms of assembly, homodimer. Homodimerization may be required to stabilize the binding of ScpA to the Smc head domains. Component of a cohesin-like complex composed of ScpA, ScpB and the Smc homodimer, in which ScpA and ScpB bind to the head domain of Smc. The presence of the three proteins is required for the association of the complex with DNA.

It is found in the cytoplasm. In terms of biological role, participates in chromosomal partition during cell division. May act via the formation of a condensin-like complex containing Smc and ScpA that pull DNA away from mid-cell into both cell halves. This is Segregation and condensation protein B from Clostridium botulinum (strain 657 / Type Ba4).